The primary structure comprises 378 residues: MATSHPLAAAAATSSSSATFRPPLRFLSSPPSSLTLNRRRSFPVVCAADADAKETTKKPTIPDKAPAAGSSFNQLLGIKGAKQETNIWKIRLQLTKPVTWPPLVWGVLCGAAASGNFHWTVEDVTKSIVCMLMSGPCLTGYTQTINDWYDRDIDAINEPYRPIPSGAISENEVITQIWVLLLGGLGLGALLDIWAGHDFPIIFYLALGGSLLSYIYSAPPLKLKQNGWIGNFALGASYIGLPWWAGQALFGTLTPDIVVLTCLYSIAGLGIAIVNDFKSIEGDRTLGLQSLPVAFGMETAKWICVGAIDITQLSVAAYLLSTGKLYYALALLGLTIPQVILQFQYFLKDPVKYDVKYQASAQPFFVFGLLVTALATSH.

A chloroplast-targeting transit peptide spans 1–45 (MATSHPLAAAAATSSSSATFRPPLRFLSSPPSSLTLNRRRSFPVV). 7 helical membrane-spanning segments follow: residues 173–193 (VITQIWVLLLGGLGLGALLDI), 199–219 (FPIIFYLALGGSLLSYIYSAP), 232–252 (FALGASYIGLPWWAGQALFGT), 257–277 (IVVLTCLYSIAGLGIAIVNDF), 302–322 (WICVGAIDITQLSVAAYLLST), 327–347 (YALALLGLTIPQVILQFQYFL), and 357–377 (YQASAQPFFVFGLLVTALATS).

It belongs to the UbiA prenyltransferase family. Chlorophyll synthase subfamily. The cofactor is Mg(2+). Requires Zn(2+) as cofactor. Mn(2+) serves as cofactor.

It localises to the plastid. Its subcellular location is the chloroplast membrane. The catalysed reaction is phytyl diphosphate + chlorophyllide a + H(+) = chlorophyll a + diphosphate. With respect to regulation, inhibited by N-phenylmaleimide (NPM) and diacetyl. Functionally, involved in one of the last steps of the biosynthesis of chlorophyll a. Catalyzes the esterification of chlorophillide a with either geranylgeranyldiphosphate (GGPP) or phytyldiphosphate (PhyPP). May also use with a lower efficiency the monophosphates GGMP and PhyMP, but not the non-phosphorylated alcohols geranylgeraniol and phytol. The tetraprenyl diphosphate must bind to the enzyme as the first substrate and esterification occurs when this pre-loaded enzyme meets the second substrate, chlorophyllide. The polypeptide is Chlorophyll synthase, chloroplastic (CHLG) (Avena sativa (Oat)).